The following is a 44-amino-acid chain: Defensin-like peptide (44 aa).

Cystine bridges form between Cys7-Cys32, Cys18-Cys40, and Cys22-Cys42.

Hemolymph.

It is found in the secreted. Functionally, has antibacterial activity against the Gram-positive bacterium S.lutea (MIC=1.9 uM). Lacks antibacterial activity against the Gram-positive bacteria L.monocytogenes and M.luteus, and the Gram-negative bacteria E.coli D31, E.coli ATCC 25922, and S.typhimurium. Has antifungal activity against A.niger (MIC=2.9 uM), C.albicans (MIC=2.9 uM), C.fructus (MIC=2.9 uM), C.wickerhamii (MIC=2.9 uM), P.pastoris (MIC=2.9 uM), P.stiptis (MIC=2.9 uM), P.tannophilus (MIC=2.9 uM), T.harzianum (MIC=2.9 uM), and Z.marxianus (MIC=2.9 uM), but lacks antifungal activity against C.albidus, F.oxysporum, and S.cerevisiae. This Galleria mellonella (Greater wax moth) protein is Defensin-like peptide.